The primary structure comprises 282 residues: Pantothenate synthetase (282 aa).

30 to 37 (MGYLHAGH) provides a ligand contact to ATP. Residue His-37 is the Proton donor of the active site. A (R)-pantoate-binding site is contributed by Gln-61. Gln-61 is a binding site for beta-alanine. Residue 147 to 150 (GKKD) coordinates ATP. A (R)-pantoate-binding site is contributed by Gln-153. ATP contacts are provided by residues Val-176 and 184–187 (MSSR).

This sequence belongs to the pantothenate synthetase family. In terms of assembly, homodimer.

The protein resides in the cytoplasm. The catalysed reaction is (R)-pantoate + beta-alanine + ATP = (R)-pantothenate + AMP + diphosphate + H(+). It participates in cofactor biosynthesis; (R)-pantothenate biosynthesis; (R)-pantothenate from (R)-pantoate and beta-alanine: step 1/1. Its function is as follows. Catalyzes the condensation of pantoate with beta-alanine in an ATP-dependent reaction via a pantoyl-adenylate intermediate. The protein is Pantothenate synthetase of Geotalea uraniireducens (strain Rf4) (Geobacter uraniireducens).